A 222-amino-acid chain; its full sequence is uncharacterized protein (222 aa).

7 helical membrane-spanning segments follow: residues 26–46, 48–68, 75–95, 107–127, 139–159, 166–186, and 198–218; these read YGLL…SQQM, LPYP…FLTV, WGLV…GPIL, VITS…AYVL, FITA…FFQI, ISAG…SAII, and ISLY…FGIA.

It belongs to the BI1 family.

It localises to the cell membrane. This is an uncharacterized protein from Pseudomonas aeruginosa (strain ATCC 15692 / DSM 22644 / CIP 104116 / JCM 14847 / LMG 12228 / 1C / PRS 101 / PAO1).